Here is a 148-residue protein sequence, read N- to C-terminus: Fibroblast growth factor 1 (148 aa).

Positions 1 to 11 are excised as a propeptide; it reads EITTFAALTER. Residue asparagine 29 coordinates heparin. Residues 123–139 form a heparin-binding region; it reads KKNGKTKLGSRTHFGQK.

Belongs to the heparin-binding growth factors family.

The protein resides in the secreted. It localises to the cytoplasm. It is found in the cell cortex. The protein localises to the cytosol. Its subcellular location is the nucleus. Plays an important role in the regulation of cell survival, cell division, angiogenesis, cell differentiation and cell migration. Functions as a potent mitogen in vitro. Acts as a ligand for FGFR1 and integrins. Binds to FGFR1 in the presence of heparin leading to FGFR1 dimerization and activation via sequential autophosphorylation on tyrosine residues which act as docking sites for interacting proteins, leading to the activation of several signaling cascades. Binds to integrins. Its binding to integrins and subsequent ternary complex formation with integrins and FGFR1 are essential for FGF1 signaling. The chain is Fibroblast growth factor 1 (fgf1) from Cynops pyrrhogaster (Japanese fire-bellied newt).